The primary structure comprises 364 residues: MNAKTYEALETMQKRLLQILKDLEDENILKDIKKFTELNKEKSNLEEVVEKFVEYKKAVEHIKDAKAILENEKDQELIELAKIELDENNDKVEHLQQVIEEMLLPKDPNDDKNVIVEIRGAAGGDEANIFAGDLLRMYKLYAETQNWKINILEASVGEAGGYSQVVFMIKGDRVYSKLKFESGAHRVQRVPKTEAKGRIQTSTATVAVLPEMSEVEIEIRSNDLRIDTYRASGAGGQHVNTTDSAVRITHLPTGIVVTSQDGRSQHDNKDIAMTMLRTKVYEAEVEKQQAQADATRKNAVGTGARSEKIRTYNYPQNRVTDHRVGLTLNKLDQVMEGNIDEFIIALINEEQRQKVAEQLEKNNE.

Position 237 is an N5-methylglutamine (Gln237).

Belongs to the prokaryotic/mitochondrial release factor family. Post-translationally, methylated by PrmC. Methylation increases the termination efficiency of RF1.

The protein resides in the cytoplasm. Functionally, peptide chain release factor 1 directs the termination of translation in response to the peptide chain termination codons UAG and UAA. In Mycoplasma mycoides subsp. mycoides SC (strain CCUG 32753 / NCTC 10114 / PG1), this protein is Peptide chain release factor 1.